The primary structure comprises 317 residues: Multivesicular body subunit 12B (317 aa).

A disordered region spans residues 1-49 (MRSCFCVRRSRDPPPPQPPPPQRGTDQATMPEVKELSEALPETPMDPIT). Pro residues predominate over residues 13–22 (PPPPQPPPPQ). The region spanning 45 to 191 (MDPITGVGVV…SMGIWYRMGR (147 aa)) is the MABP domain. Phosphoserine is present on S99. 3 positions are modified to phosphothreonine: T120, T202, and T203. The disordered stretch occupies residues 193-218 (PRNHDSSQPTTPSQSSASSTPAPNLP). Positions 198–214 (SSQPTTPSQSSASSTPA) are enriched in low complexity. S222 is modified (phosphoserine). The UMA domain occupies 252-301 (MDGVPFMISEKFSCIPESMQPFDLLGITIKSLAEIEKEYEYSFRTEQSAA). Residues 297-317 (EQSAAARLPPSPTRCQQIPQS) are disordered. Position 307 is a phosphoserine (S307).

The protein belongs to the MVB12 family. In terms of assembly, component of the ESCRT-I complex (endosomal sorting complex required for transport I) which consists of TSG101, VPS28, a VPS37 protein (VPS37A to -D) and MVB12A or MVB12B in a 1:1:1:1 stoichiometry. Interacts with TSG101; the association appears to be mediated by the TSG101-VPS37 binary subcomplex. Interacts with VPS28. Interacts with VPS37B; the association appears to be mediated by the TSG101-VPS37 binary subcomplex. Interacts with VPS37C; the association appears to be mediated by the TSG101-VPS37 binary subcomplex.

The protein localises to the endosome. It localises to the late endosome membrane. Component of the ESCRT-I complex, a regulator of vesicular trafficking process. Required for the sorting of endocytic ubiquitinated cargos into multivesicular bodies. This is Multivesicular body subunit 12B (Mvb12b) from Mus musculus (Mouse).